Here is a 198-residue protein sequence, read N- to C-terminus: Non-structural protein 5 (198 aa).

3 disordered regions span residues 13 to 37, 52 to 72, and 86 to 106; these read ISSS…IGRS, MLSK…DPLT, and DAGV…IGYD. Low complexity predominate over residues 22–37; sequence SSSTTSTISGKSIGRS. A Phosphoserine; by host CK1 modification is found at Ser-67. A compositionally biased stretch (polar residues) spans 91 to 100; it reads MDSSAQSRPS. Asp-92 serves as a coordination point for Mg(2+). Residues Ser-154, Ser-156, Ser-164, and Ser-166 each carry the phosphoserine; by host modification.

The protein belongs to the rotavirus NSP5 family. In terms of assembly, homodimer. Interacts with VP1. Interacts with VP2. Interacts with NSP2; this interaction leads to up-regulation of NSP5 hyperphosphorylation and formation of virus factories. Interacts with NSP6. Participates in the selective exclusion of host proteins from stress granules (SG) and P bodies (PB). Also participates in the sequestration of these remodeled organelles in viral factories. The cofactor is Mg(2+). Post-translationally, O-glycosylated. In terms of processing, hyperphosphorylated on serine residues, when in dimeric form. Phosphorylation by host CK1 is required for the hyperphosphorylation of NSP5 dimer.

It is found in the host cytoplasm. Functionally, plays an essential role in the viral genome replication. Participates, together with NSP2, in the formation of viral factories (viroplasms), which are large inclusions in the host cytoplasm where replication intermediates are assembled and viral RNA replication takes place. Orchestrates the recruitment of viroplasmic proteins such as capsid proteins to these factories. Participates in the selective exclusion of host proteins from stress granules (SG) and P bodies (PB). Also participates in the sequestration of these remodeled organelles in viral factories. This chain is Non-structural protein 5, found in Homo sapiens (Human).